The primary structure comprises 357 residues: Norreticuline-7-O-methyltransferase (357 aa).

Position 225 (Asp225) interacts with S-adenosyl-L-methionine. The Proton acceptor role is filled by His263.

It belongs to the class I-like SAM-binding methyltransferase superfamily. Cation-independent O-methyltransferase family. As to expression, expressed instems, leaves, roots and seedlings.

Functionally, involved in the biosynthesis of benzylisoquinoline alkaloids. Catalyzes specifically the methylation of norreticuline at position seven to produce norlaudanine. No activity with norcoclaurine, reticuline, norlaudanosoline, norisoorientaline, scoulerine, salutaridinol, oripavine, salsolinol, codeine or morphine. Involved in papaverine biosynthesis. This Papaver somniferum (Opium poppy) protein is Norreticuline-7-O-methyltransferase.